The primary structure comprises 141 residues: Large ribosomal subunit protein uL11 (141 aa).

Belongs to the universal ribosomal protein uL11 family. In terms of assembly, part of the ribosomal stalk of the 50S ribosomal subunit. Interacts with L10 and the large rRNA to form the base of the stalk. L10 forms an elongated spine to which L12 dimers bind in a sequential fashion forming a multimeric L10(L12)X complex. In terms of processing, one or more lysine residues are methylated.

Forms part of the ribosomal stalk which helps the ribosome interact with GTP-bound translation factors. The protein is Large ribosomal subunit protein uL11 of Clostridium novyi (strain NT).